Here is a 94-residue protein sequence, read N- to C-terminus: MLKPLGDRVVIELVQAEEKTASGIVLPETAKEKPQEGKVIAVGTGRVLENGERVALEVAAGDLIIFSKYAGTEVKYEGTDYLILRESDILAIIG.

This sequence belongs to the GroES chaperonin family. As to quaternary structure, heptamer of 7 subunits arranged in a ring. Interacts with the chaperonin GroEL.

It localises to the cytoplasm. In terms of biological role, together with the chaperonin GroEL, plays an essential role in assisting protein folding. The GroEL-GroES system forms a nano-cage that allows encapsulation of the non-native substrate proteins and provides a physical environment optimized to promote and accelerate protein folding. GroES binds to the apical surface of the GroEL ring, thereby capping the opening of the GroEL channel. The chain is Co-chaperonin GroES from Bacillus mycoides (strain KBAB4) (Bacillus weihenstephanensis).